The chain runs to 282 residues: HTH-type transcriptional activator RhaR (282 aa).

Residues 179-277 form the HTH araC/xylS-type domain; sequence DKLITRLAAS…GMTPSQWRHL (99 aa). 2 DNA-binding regions (H-T-H motif) span residues 196-217 and 244-267; these read DKFC…RQQT and ISDI…TRET.

In terms of assembly, binds DNA as a dimer.

The protein localises to the cytoplasm. Functionally, activates expression of the rhaSR operon in response to L-rhamnose. The protein is HTH-type transcriptional activator RhaR of Shigella flexneri serotype 5b (strain 8401).